Consider the following 269-residue polypeptide: UPF0329 protein ECU04_1660 (269 aa).

Positions 1–12 (MEERERGKEKGS) are enriched in basic and acidic residues. The interval 1–74 (MEERERGKEK…SPKEKSKGEE (74 aa)) is disordered. Over residues 13–23 (KGKGRKKRGKK) the composition is skewed to basic residues. The segment covering 24-36 (GAGEAKEESKEED) has biased composition (basic and acidic residues). Positions 37–51 (RGEEEEESVEADVPV) are enriched in acidic residues.

The protein belongs to the UPF0329 family.

The sequence is that of UPF0329 protein ECU04_1660 from Encephalitozoon cuniculi (strain GB-M1) (Microsporidian parasite).